Here is a 228-residue protein sequence, read N- to C-terminus: MPKLILCRHGQSEWNAKNLFTGWADVKLSKQGIEEAQSAGKKIYGNQIEIDIAFTSLLTRALETTQYILAGSDQQWIPVYKSWRLNERHYGGLQGLNKDDARKKWGEDQVHQWRRSYDVRPPRESEEQREAYLKNRRYQHIDHRMMPYCESLKDTLERVVPFWTDHISQHLLDDKTVLVSAHGNSIRALIKYLEGLSEEDIVGYEIKTGAPLVYELTDDLVVKDKYYL.

Substrate contacts are provided by residues 8 to 15 (RHGQSEWN), 21 to 22 (TG), Arg-60, 87 to 90 (ERHY), Lys-98, 114 to 115 (RR), and 183 to 184 (GN). Catalysis depends on His-9, which acts as the Tele-phosphohistidine intermediate. The active-site Proton donor/acceptor is Glu-87.

This sequence belongs to the phosphoglycerate mutase family. BPG-dependent PGAM subfamily.

The enzyme catalyses (2R)-2-phosphoglycerate = (2R)-3-phosphoglycerate. The protein operates within carbohydrate degradation; glycolysis; pyruvate from D-glyceraldehyde 3-phosphate: step 3/5. Its function is as follows. Catalyzes the interconversion of 2-phosphoglycerate and 3-phosphoglycerate. This chain is 2,3-bisphosphoglycerate-dependent phosphoglycerate mutase, found in Staphylococcus epidermidis (strain ATCC 35984 / DSM 28319 / BCRC 17069 / CCUG 31568 / BM 3577 / RP62A).